The primary structure comprises 305 residues: Tyrosine recombinase XerC (305 aa).

A Core-binding (CB) domain is found at 4–95 (TSIQALINKW…AVKNFYRFLE (92 aa)). Residues 116–298 (LLPKALSEDD…SIKHLEAVYT (183 aa)) enclose the Tyr recombinase domain. Residues Arg159, Lys182, His250, Arg253, and His276 contribute to the active site. Tyr285 serves as the catalytic O-(3'-phospho-DNA)-tyrosine intermediate.

Belongs to the 'phage' integrase family. XerC subfamily. Forms a cyclic heterotetrameric complex composed of two molecules of XerC and two molecules of XerD.

It localises to the cytoplasm. Functionally, site-specific tyrosine recombinase, which acts by catalyzing the cutting and rejoining of the recombining DNA molecules. The XerC-XerD complex is essential to convert dimers of the bacterial chromosome into monomers to permit their segregation at cell division. It also contributes to the segregational stability of plasmids. The chain is Tyrosine recombinase XerC from Rickettsia massiliae (strain Mtu5).